Consider the following 382-residue polypeptide: Na(+)/H(+) antiporter NhaA (382 aa).

A run of 10 helical transmembrane segments spans residues Ile5–Trp25, Phe42–Ile62, Leu88–Ile108, Gly116–Phe136, Phe145–Tyr165, Val169–Ile189, Ile261–Ser281, Val282–Leu302, Thr327–Val347, and Gly353–Gly373.

Belongs to the NhaA Na(+)/H(+) (TC 2.A.33) antiporter family.

It is found in the cell inner membrane. The enzyme catalyses Na(+)(in) + 2 H(+)(out) = Na(+)(out) + 2 H(+)(in). Na(+)/H(+) antiporter that extrudes sodium in exchange for external protons. In Geobacter metallireducens (strain ATCC 53774 / DSM 7210 / GS-15), this protein is Na(+)/H(+) antiporter NhaA.